Here is a 34-residue protein sequence, read N- to C-terminus: COP9 signalosome complex subunit 5a (34 aa).

It belongs to the peptidase M67A family. CSN5 subfamily. Component of the CSN complex, probably composed of CSN1, CSN2, CSN3, CSN4, CSN5 (CSN5A or CSN5B), CSN6 (CSN6A or CSN6B), CSN7 and CSN8. A divalent metal cation serves as cofactor.

The protein localises to the cytoplasm. The protein resides in the nucleus. Functionally, probable protease subunit of the COP9 signalosome complex (CSN), a complex involved in various cellular and developmental processes such as photomorphogenesis and auxin and jasmonate responses. The CSN complex is an essential regulator of the ubiquitin (Ubl) conjugation pathway by mediating the deneddylation of the cullin subunits of the SCF-type E3 ligase complexes, leading to decrease the Ubl ligase activity of SCF. In the complex, it probably acts as the catalytic center that mediates the cleavage of Nedd8 from cullins. It however has no metalloprotease activity by itself and requires the other subunits of the CSN complex. The CSN complex is involved in repression of photomorphogenesis in darkness by regulating the activity of COP1-containing Ubl ligase complexes. The polypeptide is COP9 signalosome complex subunit 5a (CSN5A) (Brassica oleracea (Wild cabbage)).